We begin with the raw amino-acid sequence, 247 residues long: Cell division protein ZapD (247 aa).

It belongs to the ZapD family. In terms of assembly, interacts with FtsZ.

The protein resides in the cytoplasm. Cell division factor that enhances FtsZ-ring assembly. Directly interacts with FtsZ and promotes bundling of FtsZ protofilaments, with a reduction in FtsZ GTPase activity. The protein is Cell division protein ZapD of Escherichia coli O157:H7.